We begin with the raw amino-acid sequence, 250 residues long: Isoprenyl transferase (250 aa).

The active site involves D27. Residue D27 coordinates Mg(2+). Substrate-binding positions include G28 to R31, W32, H48, and S76 to E78. Residue N79 is the Proton acceptor of the active site. Substrate-binding positions include F80, R82, R199, and R205 to S207. Residue E218 coordinates Mg(2+).

It belongs to the UPP synthase family. In terms of assembly, homodimer. It depends on Mg(2+) as a cofactor.

Functionally, catalyzes the condensation of isopentenyl diphosphate (IPP) with allylic pyrophosphates generating different type of terpenoids. The sequence is that of Isoprenyl transferase from Chlamydia pneumoniae (Chlamydophila pneumoniae).